Here is a 155-residue protein sequence, read N- to C-terminus: uncharacterized protein (155 aa).

The N-terminal stretch at 1–21 is a signal peptide; the sequence is MFFIVAAGFVIAALIAAIGMA. The interval 35–155 is disordered; that stretch reads GQTKPATTRP…PVYRPPEEMV (121 aa). Residues 118-128 are compositionally biased toward polar residues; the sequence is ATASNTPQNEA.

This is an uncharacterized protein from Schizosaccharomyces pombe (strain 972 / ATCC 24843) (Fission yeast).